Reading from the N-terminus, the 607-residue chain is SNW/SKI-interacting protein A (607 aa).

Disordered regions lie at residues 29–77, 178–205, 217–265, 327–434, and 516–607; these read ERYG…GGAF, AQPK…AAFN, EMAQ…IPPC, LQLK…DRDR, and KVMK…ERGR. Residues 35 to 49 are compositionally biased toward low complexity; that stretch reads SAQSDAAAAAAKPSG. The segment at 190–353 is SNW; that stretch reads SKFIKYKPSQ…QKARMERTGA (164 aa). Positions 240 to 251 are enriched in pro residues; it reads PPVPVMHSPPRP. Coiled coils occupy residues 313 to 349 and 391 to 418; these read AREA…ARME and EREA…LEAR. 5 stretches are compositionally biased toward basic and acidic residues: residues 327–339, 379–434, 516–527, 535–550, and 562–571; these read LQLK…EQEL, EQPR…DRDR, KVMKTDRFKPDK, RSGK…KQEE, and EVKKGKKAVE.

It belongs to the SNW family. In terms of assembly, interacts with FLO6/SIP4. Interacts with DIS1. As to expression, widely expressed.

The protein resides in the nucleus. In terms of biological role, acts as a positive regulator of drought and salt tolerance. Acts as a positive regulator of cell viability. This chain is SNW/SKI-interacting protein A, found in Oryza sativa subsp. japonica (Rice).